The following is a 341-amino-acid chain: Flap endonuclease 1 (341 aa).

Positions 1 to 98 (MGVQIGELIP…RELEKRREAR (98 aa)) are N-domain. The Mg(2+) site is built by aspartate 27, aspartate 80, glutamate 152, glutamate 154, aspartate 173, aspartate 175, and aspartate 236. Positions 116 to 258 (EAKKYAMRAT…KALTIVKRTK (143 aa)) are I-domain. Residues 330–338 (KQSTLESWF) are interaction with PCNA.

Belongs to the XPG/RAD2 endonuclease family. FEN1 subfamily. In terms of assembly, interacts with PCNA. PCNA stimulates the nuclease activity without altering cleavage specificity. It depends on Mg(2+) as a cofactor.

In terms of biological role, structure-specific nuclease with 5'-flap endonuclease and 5'-3' exonuclease activities involved in DNA replication and repair. During DNA replication, cleaves the 5'-overhanging flap structure that is generated by displacement synthesis when DNA polymerase encounters the 5'-end of a downstream Okazaki fragment. Binds the unpaired 3'-DNA end and kinks the DNA to facilitate 5' cleavage specificity. Cleaves one nucleotide into the double-stranded DNA from the junction in flap DNA, leaving a nick for ligation. Also involved in the base excision repair (BER) pathway. Acts as a genome stabilization factor that prevents flaps from equilibrating into structures that lead to duplications and deletions. Also possesses 5'-3' exonuclease activity on nicked or gapped double-stranded DNA. The chain is Flap endonuclease 1 from Thermococcus onnurineus (strain NA1).